A 280-amino-acid polypeptide reads, in one-letter code: Phosphonates import ATP-binding protein PhnC 1 (280 aa).

The ABC transporter domain maps to 3-247 (FRLDAASVSY…LLRELYASES (245 aa)). 36 to 43 (GPSGAGKT) contacts ATP.

Belongs to the ABC transporter superfamily. Phosphonates importer (TC 3.A.1.9.1) family. In terms of assembly, the complex is composed of two ATP-binding proteins (PhnC), two transmembrane proteins (PhnE) and a solute-binding protein (PhnD).

Its subcellular location is the cell inner membrane. The enzyme catalyses phosphonate(out) + ATP + H2O = phosphonate(in) + ADP + phosphate + H(+). Functionally, part of the ABC transporter complex PhnCDE involved in phosphonates import. Responsible for energy coupling to the transport system. The chain is Phosphonates import ATP-binding protein PhnC 1 from Cupriavidus necator (strain ATCC 17699 / DSM 428 / KCTC 22496 / NCIMB 10442 / H16 / Stanier 337) (Ralstonia eutropha).